A 396-amino-acid polypeptide reads, in one-letter code: MRGGQRRASRLRPPTYRRRPPPAASILEVAPVQTQTLTQTDTAAGGAEPDAERGVLLAMPAQPGAGAALPHPGAPVDVPEHPEPPPPTRTESGGPSSDLFRQYLREIGRIPLLSAAEEVDLARRVEAGLFAEEKLRCSPGLDDRLALDLDRLVVLGRLAKRRLIEANLRLVVSVAKRYVGRGLTMLDLVQEGNLGLIRAVEKFDYARGYKFSTYATWWIRQAMSRALADQARTIRVPVHVVELINRVVRVQRRMLQERGCEPTPQEVAAHLDLAPERVGEVLRLAQEPVSLHAPVGEEDDVALGDLIEDGDAASPVESAAFLLLRQHLEAVLSTLGERERKVVQLRYGLADGRPRTLEEIGRLFGVTRERIRQIESKTLSKLRDHAYADQLRGYLD.

The segment covering 1 to 20 (MRGGQRRASRLRPPTYRRRP) has biased composition (basic residues). Residues 1-96 (MRGGQRRASR…PTRTESGGPS (96 aa)) are disordered. Low complexity-rich tracts occupy residues 33–42 (QTQTLTQTDT) and 56–75 (LLAM…PGAP). A Polymerase core binding motif is present at residues 187–200 (DLVQEGNLGLIRAV). The segment at residues 357-376 (LEEIGRLFGVTRERIRQIES) is a DNA-binding region (H-T-H motif).

The protein belongs to the sigma-70 factor family. In terms of assembly, interacts transiently with the RNA polymerase catalytic core. Interacts with RNA polymerase-binding protein RbpA.

In terms of biological role, sigma factors are initiation factors that promote the attachment of RNA polymerase to specific initiation sites and are then released. This chain is RNA polymerase principal sigma factor HrdA (hrdA), found in Streptomyces coelicolor (strain ATCC BAA-471 / A3(2) / M145).